Here is an 827-residue protein sequence, read N- to C-terminus: Villin-1 (827 aa).

The tract at residues 1 to 126 (MTKLSAQVKG…IRKGGVASGM (126 aa)) is necessary for homodimerization. The tract at residues 1–734 (MTKLSAQVKG…YEDLKAELGN (734 aa)) is core. One copy of the Gelsolin-like 1 repeat lies at 27–76 (MQMVPVPSNSFGSFFDGDCYVIQAIHKTGSNLSYDIHYWIGQASSQDEQG). 2 LPA/PIP2-binding site regions span residues 112 to 119 (KKGIVIRK) and 138 to 146 (RLLHVKGKR). 2 Gelsolin-like repeats span residues 148 to 188 (VVAG…MERL) and 265 to 309 (VVVR…QEKK). At Ser-366 the chain carries Phosphoserine. Gelsolin-like repeat units lie at residues 407–457 (NLEL…DEIT), 528–568 (TKAF…DERE), and 631–672 (FLAT…DEKK). The residue at position 735 (Ser-735) is a Phosphoserine. The segment at 735–827 (SGDWSQITAE…QNLKKEKGLF (93 aa)) is headpiece. The HP domain maps to 761–827 (SGPLPIFPLE…QNLKKEKGLF (67 aa)). Residues 816-824 (KQQNLKKEK) form an LPA/PIP2-binding site 3 region.

Belongs to the villin/gelsolin family. As to quaternary structure, monomer. Homodimer; homodimerization is necessary for actin-bundling. Associates with F-actin; phosphorylation at tyrosine residues decreases the association with F-actin. Interacts (phosphorylated at C-terminus tyrosine phosphorylation sites) with PLCG1 (via the SH2 domains). Interacts (phosphorylated form) with PLCG1; the interaction is enhanced by hepatocyte growth factor (HGF). Post-translationally, phosphorylated on tyrosine residues by SRC. The unphosphorylated form increases the initial rate of actin-nucleating activity, whereas the tyrosine-phosphorylated form inhibits actin-nucleating activity, enhances actin-bundling activity and enhances actin-severing activity by reducing high Ca(2+) requirements. The tyrosine-phosphorylated form does not regulate actin-capping activity. Tyrosine phosphorylation is essential for cell migration: tyrosine phosphorylation sites in the N-terminus half regulate actin reorganization and cell morphology, whereas tyrosine phosphorylation sites in the C-terminus half regulate cell migration via interaction with PLCG1. Tyrosine phosphorylation is induced by epidermal growth factor (EGF) and stimulates cell migration.

It localises to the cytoplasm. It is found in the cytoskeleton. The protein resides in the cell projection. The protein localises to the lamellipodium. Its subcellular location is the ruffle. It localises to the microvillus. It is found in the filopodium tip. The protein resides in the filopodium. Epithelial cell-specific Ca(2+)-regulated actin-modifying protein that modulates the reorganization of microvillar actin filaments. Plays a role in the actin nucleation, actin filament bundle assembly, actin filament capping and severing. Binds phosphatidylinositol 4,5-bisphosphate (PIP2) and lysophosphatidic acid (LPA); binds LPA with higher affinity than PIP2. Binding to LPA increases its phosphorylation by SRC and inhibits all actin-modifying activities. Binding to PIP2 inhibits actin-capping and -severing activities but enhances actin-bundling activity. Regulates the intestinal epithelial cell morphology, cell invasion, cell migration and apoptosis. Protects against apoptosis induced by dextran sodium sulfate (DSS) in the gastrointestinal epithelium. Appears to regulate cell death by maintaining mitochondrial integrity. Enhances hepatocyte growth factor (HGF)-induced epithelial cell motility, chemotaxis and wound repair. The sequence is that of Villin-1 (VIL1) from Bos taurus (Bovine).